We begin with the raw amino-acid sequence, 150 residues long: FAD synthase (150 aa).

Residues 8–9 (AF), 13–16 (HPGH), Asp95, and His122 contribute to the ATP site.

This sequence belongs to the archaeal FAD synthase family. As to quaternary structure, homodimer. Requires a divalent metal cation as cofactor.

The enzyme catalyses FMN + ATP + H(+) = FAD + diphosphate. The protein operates within cofactor biosynthesis; FAD biosynthesis; FAD from FMN: step 1/1. In terms of biological role, catalyzes the transfer of the AMP portion of ATP to flavin mononucleotide (FMN) to produce flavin adenine dinucleotide (FAD) coenzyme. The protein is FAD synthase of Methanobrevibacter ruminantium (strain ATCC 35063 / DSM 1093 / JCM 13430 / OCM 146 / M1) (Methanobacterium ruminantium).